Here is a 145-residue protein sequence, read N- to C-terminus: 3-dehydroquinate dehydratase (145 aa).

Tyr22 serves as the catalytic Proton acceptor. Residues Asn71, His77, and Asp84 each coordinate substrate. His97 (proton donor) is an active-site residue. Residues 98 to 99 and Arg108 contribute to the substrate site; that span reads LS.

The protein belongs to the type-II 3-dehydroquinase family. As to quaternary structure, homododecamer.

The catalysed reaction is 3-dehydroquinate = 3-dehydroshikimate + H2O. It functions in the pathway metabolic intermediate biosynthesis; chorismate biosynthesis; chorismate from D-erythrose 4-phosphate and phosphoenolpyruvate: step 3/7. Its function is as follows. Catalyzes a trans-dehydration via an enolate intermediate. The polypeptide is 3-dehydroquinate dehydratase (Francisella tularensis subsp. tularensis (strain WY96-3418)).